Consider the following 316-residue polypeptide: 4-hydroxy-3-methylbut-2-enyl diphosphate reductase (316 aa).

Cysteine 17 serves as a coordination point for [4Fe-4S] cluster. Positions 46 and 79 each coordinate (2E)-4-hydroxy-3-methylbut-2-enyl diphosphate. Dimethylallyl diphosphate-binding residues include histidine 46 and histidine 79. Isopentenyl diphosphate contacts are provided by histidine 46 and histidine 79. Residue cysteine 101 coordinates [4Fe-4S] cluster. Position 129 (histidine 129) interacts with (2E)-4-hydroxy-3-methylbut-2-enyl diphosphate. Histidine 129 is a dimethylallyl diphosphate binding site. Histidine 129 serves as a coordination point for isopentenyl diphosphate. The Proton donor role is filled by glutamate 131. Residue threonine 170 coordinates (2E)-4-hydroxy-3-methylbut-2-enyl diphosphate. Cysteine 200 is a binding site for [4Fe-4S] cluster. Positions 228, 229, 230, and 273 each coordinate (2E)-4-hydroxy-3-methylbut-2-enyl diphosphate. The dimethylallyl diphosphate site is built by serine 228, serine 229, asparagine 230, and serine 273. Isopentenyl diphosphate contacts are provided by serine 228, serine 229, asparagine 230, and serine 273.

Belongs to the IspH family. It depends on [4Fe-4S] cluster as a cofactor.

The catalysed reaction is isopentenyl diphosphate + 2 oxidized [2Fe-2S]-[ferredoxin] + H2O = (2E)-4-hydroxy-3-methylbut-2-enyl diphosphate + 2 reduced [2Fe-2S]-[ferredoxin] + 2 H(+). The enzyme catalyses dimethylallyl diphosphate + 2 oxidized [2Fe-2S]-[ferredoxin] + H2O = (2E)-4-hydroxy-3-methylbut-2-enyl diphosphate + 2 reduced [2Fe-2S]-[ferredoxin] + 2 H(+). The protein operates within isoprenoid biosynthesis; dimethylallyl diphosphate biosynthesis; dimethylallyl diphosphate from (2E)-4-hydroxy-3-methylbutenyl diphosphate: step 1/1. It functions in the pathway isoprenoid biosynthesis; isopentenyl diphosphate biosynthesis via DXP pathway; isopentenyl diphosphate from 1-deoxy-D-xylulose 5-phosphate: step 6/6. In terms of biological role, catalyzes the conversion of 1-hydroxy-2-methyl-2-(E)-butenyl 4-diphosphate (HMBPP) into a mixture of isopentenyl diphosphate (IPP) and dimethylallyl diphosphate (DMAPP). Acts in the terminal step of the DOXP/MEP pathway for isoprenoid precursor biosynthesis. This Ruegeria pomeroyi (strain ATCC 700808 / DSM 15171 / DSS-3) (Silicibacter pomeroyi) protein is 4-hydroxy-3-methylbut-2-enyl diphosphate reductase.